We begin with the raw amino-acid sequence, 272 residues long: Putative pyruvate, phosphate dikinase regulatory protein 1 (272 aa).

151 to 158 is a binding site for ADP; that stretch reads GISRTSKT.

This sequence belongs to the pyruvate, phosphate/water dikinase regulatory protein family. PDRP subfamily.

The enzyme catalyses N(tele)-phospho-L-histidyl/L-threonyl-[pyruvate, phosphate dikinase] + ADP = N(tele)-phospho-L-histidyl/O-phospho-L-threonyl-[pyruvate, phosphate dikinase] + AMP + H(+). It carries out the reaction N(tele)-phospho-L-histidyl/O-phospho-L-threonyl-[pyruvate, phosphate dikinase] + phosphate + H(+) = N(tele)-phospho-L-histidyl/L-threonyl-[pyruvate, phosphate dikinase] + diphosphate. Functionally, bifunctional serine/threonine kinase and phosphorylase involved in the regulation of the pyruvate, phosphate dikinase (PPDK) by catalyzing its phosphorylation/dephosphorylation. The polypeptide is Putative pyruvate, phosphate dikinase regulatory protein 1 (Staphylococcus epidermidis (strain ATCC 35984 / DSM 28319 / BCRC 17069 / CCUG 31568 / BM 3577 / RP62A)).